Reading from the N-terminus, the 296-residue chain is Solute carrier protein FPSE_08119 (296 aa).

The next 3 helical transmembrane spans lie at 12–32 (GLAA…GMVA), 122–142 (AGVG…VILI), and 219–239 (AVAA…FDFV). 3 Solcar repeats span residues 16–102 (LQTA…FEKE), 114–205 (LSFG…AKNQ), and 213–296 (SPPV…GPHS).

This sequence belongs to the mitochondrial carrier (TC 2.A.29) family.

Its subcellular location is the mitochondrion inner membrane. Solute carrier protein; part of the Fusarium detoxification of benzoxazolinone cluster involved in the degradation of benzoxazolinones produced by the host plant. Maize, wheat, and rye produce the 2 benzoxazinone phytoanticipins 2,4-dihy-droxy-7-methoxy-1,4-benzoxazin-3-one (DIMBOA) and 2,4-dihydroxy-1,4-benzoxazin-3-one (DIBOA) that, due to their inherent instability once released, spontaneously degrade to the more stable corresponding benzoxazolinones, 6-methoxy-2-benzoxazolinone (MBOA) and 2-benzoxazolinone (BOA), respectively. The sequence is that of Solute carrier protein FPSE_08119 from Fusarium pseudograminearum (strain CS3096) (Wheat and barley crown-rot fungus).